A 945-amino-acid chain; its full sequence is Isoleucine--tRNA ligase (945 aa).

Residues 1-10 are compositionally biased toward basic and acidic residues; the sequence is MSNKKADSKP. A disordered region spans residues 1–21; that stretch reads MSNKKADSKPQAKYPVNLLDT. A 'HIGH' region motif is present at residues 66–76; the sequence is PYANGDIHLGH. Glutamate 581 provides a ligand contact to L-isoleucyl-5'-AMP. The 'KMSKS' region motif lies at 622–626; sequence KMSKS. Lysine 625 contacts ATP. The Zn(2+) site is built by cysteine 908, cysteine 911, cysteine 928, and cysteine 931.

The protein belongs to the class-I aminoacyl-tRNA synthetase family. IleS type 1 subfamily. Monomer. Requires Zn(2+) as cofactor.

The protein resides in the cytoplasm. It carries out the reaction tRNA(Ile) + L-isoleucine + ATP = L-isoleucyl-tRNA(Ile) + AMP + diphosphate. Catalyzes the attachment of isoleucine to tRNA(Ile). As IleRS can inadvertently accommodate and process structurally similar amino acids such as valine, to avoid such errors it has two additional distinct tRNA(Ile)-dependent editing activities. One activity is designated as 'pretransfer' editing and involves the hydrolysis of activated Val-AMP. The other activity is designated 'posttransfer' editing and involves deacylation of mischarged Val-tRNA(Ile). The polypeptide is Isoleucine--tRNA ligase (Burkholderia multivorans (strain ATCC 17616 / 249)).